A 176-amino-acid chain; its full sequence is ATP-dependent protease subunit HslV (176 aa).

The active site involves threonine 2. Residues glycine 157, cysteine 160, and threonine 163 each contribute to the Na(+) site.

The protein belongs to the peptidase T1B family. HslV subfamily. A double ring-shaped homohexamer of HslV is capped on each side by a ring-shaped HslU homohexamer. The assembly of the HslU/HslV complex is dependent on binding of ATP.

It localises to the cytoplasm. The catalysed reaction is ATP-dependent cleavage of peptide bonds with broad specificity.. Allosterically activated by HslU binding. Functionally, protease subunit of a proteasome-like degradation complex believed to be a general protein degrading machinery. The chain is ATP-dependent protease subunit HslV from Proteus mirabilis (strain HI4320).